A 137-amino-acid chain; its full sequence is Cellular retinoic acid-binding protein 1 (137 aa).

A Nuclear localization signal motif is present at residues 21–31; that stretch reads KALGVNAMLRK. Position 132-134 (132-134) interacts with all-trans-retinoate; the sequence is RIY.

Belongs to the calycin superfamily. Fatty-acid binding protein (FABP) family.

Its subcellular location is the cytoplasm. In terms of biological role, cytosolic CRABPs may regulate the access of retinoic acid to the nuclear retinoic acid receptors. The sequence is that of Cellular retinoic acid-binding protein 1 (Crabp1) from Mus musculus (Mouse).